We begin with the raw amino-acid sequence, 377 residues long: ATP phosphoribosyltransferase regulatory subunit (377 aa).

The protein belongs to the class-II aminoacyl-tRNA synthetase family. HisZ subfamily. In terms of assembly, heteromultimer composed of HisG and HisZ subunits.

The protein localises to the cytoplasm. The protein operates within amino-acid biosynthesis; L-histidine biosynthesis; L-histidine from 5-phospho-alpha-D-ribose 1-diphosphate: step 1/9. Required for the first step of histidine biosynthesis. May allow the feedback regulation of ATP phosphoribosyltransferase activity by histidine. This Sinorhizobium medicae (strain WSM419) (Ensifer medicae) protein is ATP phosphoribosyltransferase regulatory subunit.